The primary structure comprises 598 residues: Probable transporter mch1 (598 aa).

The segment at 1-49 is disordered; sequence MASPTPAPRPDQISASTPLLQSDSTSSCASSIRSLSPSRRRHRNGRTSP. Residues 22-37 show a composition bias toward low complexity; it reads SDSTSSCASSIRSLSP. N-linked (GlcNAc...) asparagine glycosylation is present at Asn57. 6 consecutive transmembrane segments (helical) span residues 63–83, 96–116, 122–142, 164–184, 202–222, and 241–261; these read ALLS…GHIF, GLSS…GYMC, GPLS…AAGV, LAYA…CSMY, GLAL…QSQL, and VFHF…LGTF. The tract at residues 315-334 is disordered; sequence AGILDPSKPDNDSDSEEEDD. The N-linked (GlcNAc...) asparagine glycan is linked to Asn325. A run of 6 helical transmembrane segments spans residues 355–375, 405–425, 453–473, 486–506, 516–536, and 565–585; these read HTMW…EAFI, IVGI…DLLA, FLLF…SGWI, LVGA…TVIW, GIVA…YSAV, and SAFW…LWAW.

This sequence belongs to the major facilitator superfamily.

It is found in the vacuole membrane. Functionally, probable transporter. The chain is Probable transporter mch1 (mch1) from Neurospora crassa (strain ATCC 24698 / 74-OR23-1A / CBS 708.71 / DSM 1257 / FGSC 987).